Here is a 154-residue protein sequence, read N- to C-terminus: L-alanine exporter AlaE (154 aa).

A run of 4 helical transmembrane segments spans residues F21–M41, L51–F71, I90–A110, and I115–Y135.

This sequence belongs to the AlaE exporter family.

The protein resides in the cell inner membrane. Functionally, exports L-alanine. The protein is L-alanine exporter AlaE of Escherichia fergusonii (strain ATCC 35469 / DSM 13698 / CCUG 18766 / IAM 14443 / JCM 21226 / LMG 7866 / NBRC 102419 / NCTC 12128 / CDC 0568-73).